Here is a 1612-residue protein sequence, read N- to C-terminus: Phospholipid-transporting ATPase DNF2 (1612 aa).

The interval M1 to S74 is disordered. At M1–Q252 the chain is on the cytoplasmic side. Positions G20 to S30 are enriched in low complexity. T70 carries the phosphothreonine modification. A Phosphoserine modification is found at S85. Residues F253 to F273 form a helical membrane-spanning segment. Residues I272 to G279 are involved in phosphatidylcholine substrate selection. Residues G274–N277 lie on the Extracellular side of the membrane. The chain crosses the membrane as a helical span at residues P278–I298. The Cytoplasmic segment spans residues E299–V598. The segment covering K364–R373 has biased composition (basic and acidic residues). The disordered stretch occupies residues K364–R384. A phosphoserine mark is found at S389, S392, S396, and S403. Position 406 is a phosphotyrosine (Y406). Residues I599–Y619 form a helical membrane-spanning segment. The Extracellular portion of the chain corresponds to Y620–A639. Residues E631 to I635 form an involved in phosphatidylcholine substrate selection region. A helical membrane pass occupies residues S640–I660. Residues S661–I1231 lie on the Cytoplasmic side of the membrane. Catalysis depends on D712, which acts as the 4-aspartylphosphate intermediate. 3 residues coordinate ATP: D712, K713, and T714. D712 serves as a coordination point for Mg(2+). Residue T714 participates in Mg(2+) binding. T782 is modified (phosphothreonine). Positions 846, 887, 889, 892, and 916 each coordinate ATP. K938 participates in a covalent cross-link: Glycyl lysine isopeptide (Lys-Gly) (interchain with G-Cter in ubiquitin). 7 residues coordinate ATP: R952, T953, T1032, G1033, D1034, R1147, and K1153. D1173 contributes to the Mg(2+) binding site. Residues N1176 and D1177 each coordinate ATP. Position 1177 (D1177) interacts with Mg(2+). A helical membrane pass occupies residues P1232–N1252. Over N1253 to Y1262 the chain is Extracellular. The helical transmembrane segment at T1263–L1283 threads the bilayer. At D1284–F1313 the chain is on the cytoplasmic side. Residues L1314–A1334 traverse the membrane as a helical segment. The Extracellular segment spans residues Y1335–H1350. The chain crosses the membrane as a helical span at residues R1351–F1371. Residues M1372–W1377 lie on the Cytoplasmic side of the membrane. The helical transmembrane segment at D1378 to I1398 threads the bilayer. Residues W1399–Q1418 are Extracellular-facing. Residues P1419–I1439 traverse the membrane as a helical segment. Residue R1436 participates in a 1,2-diacyl-sn-glycero-3-phospho-L-serine binding. Over D1440–R1612 the chain is Cytoplasmic. S1542 carries the phosphoserine modification. The interval V1544 to L1563 is disordered. S1592 is modified (phosphoserine).

Belongs to the cation transport ATPase (P-type) (TC 3.A.3) family. Type IV subfamily. In terms of assembly, component of a flippase complex consisting of DNF1 and LEM3. Interacts with LEM3; the interaction is direct. Requires Mg(2+) as cofactor. Phosphorylated by FPK1 and KIN82.

Its subcellular location is the cell membrane. It carries out the reaction ATP + H2O + phospholipidSide 1 = ADP + phosphate + phospholipidSide 2.. The enzyme catalyses a 1,2-diacyl-sn-glycero-3-phosphoethanolamine(out) + ATP + H2O = a 1,2-diacyl-sn-glycero-3-phosphoethanolamine(in) + ADP + phosphate + H(+). It catalyses the reaction a 1,2-diacyl-sn-glycero-3-phosphocholine(out) + ATP + H2O = a 1,2-diacyl-sn-glycero-3-phosphocholine(in) + ADP + phosphate + H(+). The catalysed reaction is a beta-D-glucosyl-(1&lt;-&gt;1')-N-acylsphing-4-enine(out) + ATP + H2O = a beta-D-glucosyl-(1&lt;-&gt;1')-N-acylsphing-4-enine(in) + ADP + phosphate + H(+). It carries out the reaction a 1,2-diacyl-sn-glycero-3-phospho-L-serine(out) + ATP + H2O = a 1,2-diacyl-sn-glycero-3-phospho-L-serine(in) + ADP + phosphate + H(+). With respect to regulation, phosphatidylcholine flippase activity is inhibited by glucosylsphingosine, lactosylsphingosine, lysophosphatidylcholine and to a lesser degree sphingosine-1-phosphate and lysosphingomyelin. Glucosylceramide flippase activity is inhibited by lysophosphatidylcholine, glucosylsphingosine and to a lesser degree lactosylsphingosine whereas lysosphingomyelin has a stimulatory effect at low concentrations. In terms of biological role, catalytic component of a P4-ATPase flippase complex which catalyzes the hydrolysis of ATP coupled to the transport of glucosylceramide, phosphatidylcholine, phosphatidylethanolamine, and small amounts of phosphatidylserine from the lumenal to the cytosolic leaflet of the cell membrane and ensures the maintenance of asymmetric distribution of phospholipids. Does not appear to transport sphingomyelin, inositol phosphoceramide or phosphatidic acid. Required for efficient endocytosis. Required for protein transport from Golgi to vacuoles. The chain is Phospholipid-transporting ATPase DNF2 (DNF2) from Saccharomyces cerevisiae (strain ATCC 204508 / S288c) (Baker's yeast).